A 481-amino-acid polypeptide reads, in one-letter code: Putative amino-acid transporter CPE0389 (481 aa).

The next 13 membrane-spanning stretches (helical) occupy residues 7–27 (LGVI…GVYN), 36–56 (ASAG…WFIA), 87–107 (FLMA…YAVL), 127–147 (LSIA…LAGV), 156–176 (IGTI…LFSF), 208–228 (STML…VVSG), 241–261 (FLGF…PLGV), 289–309 (VIMN…WTVM), 338–358 (FSLL…HFAG), 364–384 (MLSI…LYLF), 401–421 (RKYA…LIYA), 422–442 (AGIN…PVFI), and 461–481 (YFAI…FKFM).

It belongs to the amino acid-polyamine-organocation (APC) superfamily. Basic amino acid/polyamine antiporter (APA) (TC 2.A.3.2) family.

It localises to the cell membrane. In terms of biological role, could be an amino acid transporter. The chain is Putative amino-acid transporter CPE0389 from Clostridium perfringens (strain 13 / Type A).